A 200-amino-acid chain; its full sequence is Protein OPI10 homolog (200 aa).

It belongs to the OPI10 family.

Its subcellular location is the cytoplasm. It is found in the nucleus envelope. In Schizosaccharomyces pombe (strain 972 / ATCC 24843) (Fission yeast), this protein is Protein OPI10 homolog.